The sequence spans 70 residues: MNSNDLAKRGESLIRHSTNRYLTTVRIAFRAKQRRFDDFDGLLEESTVKPVQRAIIELSDEQDQPDLLPG.

It belongs to the RNA polymerase subunit omega family. In terms of assembly, in cyanobacteria the RNAP catalytic core is composed of 2 alpha, 1 beta, 1 beta', 1 gamma and 1 omega subunit. When a sigma factor is associated with the core the holoenzyme is formed, which can initiate transcription.

It catalyses the reaction RNA(n) + a ribonucleoside 5'-triphosphate = RNA(n+1) + diphosphate. Promotes RNA polymerase assembly. Latches the N- and C-terminal regions of the beta' subunit thereby facilitating its interaction with the beta and alpha subunits. The protein is DNA-directed RNA polymerase subunit omega of Prochlorococcus marinus (strain NATL1A).